A 192-amino-acid chain; its full sequence is uncharacterized protein (192 aa).

The tract at residues 17–73 (MLRGSGKKPIQRLAKAPAATASSKTSEWRATTAYGFLPAGGDVRPHSPRYESQGVLS) is disordered. Residues 30 to 41 (AKAPAATASSKT) are compositionally biased toward low complexity.

This is an uncharacterized protein from Sinorhizobium fredii (strain NBRC 101917 / NGR234).